The chain runs to 108 residues: UPF0060 membrane protein Nwi_1459 (108 aa).

A run of 4 helical transmembrane segments spans residues 5–25 (AAYV…WAWL), 31–51 (VWWL…LTLV), 61–81 (AAYG…VEGI), and 88–108 (LAGA…PHEI).

Belongs to the UPF0060 family.

The protein resides in the cell inner membrane. The protein is UPF0060 membrane protein Nwi_1459 of Nitrobacter winogradskyi (strain ATCC 25391 / DSM 10237 / CIP 104748 / NCIMB 11846 / Nb-255).